The chain runs to 1915 residues: Protein TIC 214 (1915 aa).

6 consecutive transmembrane segments (helical) span residues 18–38, 64–84, 90–110, 126–146, 174–194, and 230–250; these read IINSVVVVGLYYGFLTTFSIG, FITGQLMMFISIYYAPLHLAL, ITVLVLPYLLFHFFWHNHKYF, LNIQCVFLNNLIFPLFNHFIL, VGWLIGHILFMKWVELVLIWI, and IFSILLFITCIYYLGRMPSTL. 2 disordered regions span residues 260–319 and 1566–1631; these read KMKQ…EIRV and NKNI…GSVL. Residues 267–277 show a composition bias toward acidic residues; it reads SEEETDVEIET. The span at 279–288 shows a compositional bias: basic and acidic residues; sequence SETKETKEEQ. Over residues 304–315 the composition is skewed to acidic residues; that stretch reads EKEDPDKIDETE. The segment covering 1587 to 1601 has biased composition (basic and acidic residues); sequence KSLELENRNQEEKES. Residues 1602 to 1631 show a composition bias toward polar residues; the sequence is SSQGDLGSNAQNQGNLGPNAQNQGNLGSVL.

Belongs to the TIC214 family. In terms of assembly, part of the Tic complex.

Its subcellular location is the plastid. The protein resides in the chloroplast inner membrane. Functionally, involved in protein precursor import into chloroplasts. May be part of an intermediate translocation complex acting as a protein-conducting channel at the inner envelope. This is Protein TIC 214 from Platanus occidentalis (Sycamore).